The primary structure comprises 388 residues: Myosin light chain kinase family member 4 (388 aa).

In terms of domain architecture, Protein kinase spans 106–361; that stretch reads VSKTEILGGG…ASEALKHPWL (256 aa). Residues 112–120 and Lys135 each bind ATP; that span reads LGGGRFGQV. Asp227 serves as the catalytic Proton acceptor.

The protein belongs to the protein kinase superfamily. CAMK Ser/Thr protein kinase family.

It catalyses the reaction L-seryl-[protein] + ATP = O-phospho-L-seryl-[protein] + ADP + H(+). The enzyme catalyses L-threonyl-[protein] + ATP = O-phospho-L-threonyl-[protein] + ADP + H(+). The protein is Myosin light chain kinase family member 4 (MYLK4) of Homo sapiens (Human).